Consider the following 357-residue polypeptide: NADH-quinone oxidoreductase subunit H (357 aa).

8 helical membrane passes run 20-40, 92-112, 127-147, 165-185, 206-226, 254-274, 294-314, and 329-349; these read WLVL…ILCV, ILFV…WAVV, LLYV…AGWA, VSYE…SGSL, FLSW…ISAV, MAFA…SCMA, IPGW…FVWF, and LGWK…AIWM.

This sequence belongs to the complex I subunit 1 family. In terms of assembly, NDH-1 is composed of 14 different subunits. Subunits NuoA, H, J, K, L, M, N constitute the membrane sector of the complex.

It is found in the cell inner membrane. It carries out the reaction a quinone + NADH + 5 H(+)(in) = a quinol + NAD(+) + 4 H(+)(out). NDH-1 shuttles electrons from NADH, via FMN and iron-sulfur (Fe-S) centers, to quinones in the respiratory chain. The immediate electron acceptor for the enzyme in this species is believed to be ubiquinone. Couples the redox reaction to proton translocation (for every two electrons transferred, four hydrogen ions are translocated across the cytoplasmic membrane), and thus conserves the redox energy in a proton gradient. This subunit may bind ubiquinone. The protein is NADH-quinone oxidoreductase subunit H of Bordetella petrii (strain ATCC BAA-461 / DSM 12804 / CCUG 43448).